A 176-amino-acid polypeptide reads, in one-letter code: Ribosome rescue factor SmrB (176 aa).

Residues 93–168 (LDLHGYRQSE…GDAALLVLID (76 aa)) form the Smr domain.

It belongs to the SmrB family. As to quaternary structure, associates with collided ribosomes, but not with correctly translating polysomes.

Acts as a ribosome collision sensor. Detects stalled/collided disomes (pairs of ribosomes where the leading ribosome is stalled and a second ribosome has collided with it) and endonucleolytically cleaves mRNA at the 5' boundary of the stalled ribosome. Stalled/collided disomes form a new interface (primarily via the 30S subunits) that binds SmrB. Cleaved mRNA becomes available for tmRNA ligation, leading to ribosomal subunit dissociation and rescue of stalled ribosomes. This Shewanella baltica (strain OS155 / ATCC BAA-1091) protein is Ribosome rescue factor SmrB.